Here is a 121-residue protein sequence, read N- to C-terminus: Small ribosomal subunit protein uS11 (121 aa).

Belongs to the universal ribosomal protein uS11 family. Part of the 30S ribosomal subunit. Interacts with proteins S7 and S18. Binds to IF-3.

Located on the platform of the 30S subunit, it bridges several disparate RNA helices of the 16S rRNA. Forms part of the Shine-Dalgarno cleft in the 70S ribosome. The protein is Small ribosomal subunit protein uS11 of Mycoplasmoides gallisepticum (strain R(low / passage 15 / clone 2)) (Mycoplasma gallisepticum).